Here is a 210-residue protein sequence, read N- to C-terminus: Placenta-expressed transcript 1 protein (210 aa).

The signal sequence occupies residues 1 to 26 (MAVLGSPLLPLRLFLCFGLLFFSASC). Residues 27-189 (TDHPDQCMIF…THKNSANRVF (163 aa)) are Extracellular-facing. N-linked (GlcNAc...) asparagine glycosylation is found at Asn67 and Asn94. A helical transmembrane segment spans residues 190–209 (RSPVRDAIQILLAFLTSKLL). Phe210 is a topological domain (cytoplasmic).

As to expression, highly expressed in placenta.

The protein resides in the membrane. Its subcellular location is the apical cell membrane. Functionally, modulates leading keratinocyte migration and cellular adhesion to matrix proteins during a wound-healing response and promotes wound repair. May play a role during trichilemmal differentiation of the hair follicle. The sequence is that of Placenta-expressed transcript 1 protein (PLET1) from Sus scrofa (Pig).